A 397-amino-acid polypeptide reads, in one-letter code: MRRNTQDENMRKWFKVTIPYGIKYDKAWLMNSIQSNCSVPFTPVDFHYIRNRACFFVQVASAASALKDVSYKIYDDENQKICIFVSHFTAPYSVKNKLKPGQMEMLKLTMNKRYNVSQQALDLQNLRFDPDLMGRDIDIILNRRNCMAATLKITERNFPELLSLNLCNNKLYQLDGLSDITEKAPKVKTLNLSKNKLESAWELGKVKGLKLEELWLEGNPLCSTFSDQSAYVSAIRDCFPKLLRLDGRELSAPVIVDIDSSETMKPCKENFTGSETLKHLVLQFLQQSNLCKYFKDSRNIKILKDPYLQRKLLKHTKCPRNVDSLSALPETQHDFTSILVDMWYQTVNTCFLPRAGPESQRWWCLLSLKWKDGLRVLILPSCGPSSLPLAAIPVCAS.

The RRM domain occupies 13–92 (WFKVTIPYGI…IFVSHFTAPY (80 aa)). LRR repeat units follow at residues 160–185 (ELLSLNLCNNKLYQLDGLSDITEKAP), 186–209 (KVKTLNLSKNKLESAWELGKVKGL), 210–237 (KLEELWLEGNPLCSTFSDQSAYVSAIRD), and 238–265 (CFPKLLRLDGRELSAPVIVDIDSSETMK). The NTF2; truncated domain maps to 280 to 367 (LVLQFLQQSN…ESQRWWCLLS (88 aa)).

It belongs to the NXF family. As to quaternary structure, interacts with NXT1 and NXT2.

The protein resides in the cytoplasm. It is found in the nucleus. Its function is as follows. Could be involved in the export of mRNA from the nucleus to the cytoplasm. Could also have a role in polarized cytoplasmic transport and localization of mRNA in neurons. This is Nuclear RNA export factor 5 (NXF5) from Homo sapiens (Human).